The sequence spans 258 residues: Regulatory protein RecX (258 aa).

Belongs to the RecX family.

It is found in the cytoplasm. Modulates RecA activity. This Streptococcus equi subsp. equi (strain 4047) protein is Regulatory protein RecX.